Here is a 286-residue protein sequence, read N- to C-terminus: ATP synthase gamma chain (286 aa).

Belongs to the ATPase gamma chain family. As to quaternary structure, F-type ATPases have 2 components, CF(1) - the catalytic core - and CF(0) - the membrane proton channel. CF(1) has five subunits: alpha(3), beta(3), gamma(1), delta(1), epsilon(1). CF(0) has three main subunits: a, b and c.

Its subcellular location is the cell inner membrane. In terms of biological role, produces ATP from ADP in the presence of a proton gradient across the membrane. The gamma chain is believed to be important in regulating ATPase activity and the flow of protons through the CF(0) complex. This chain is ATP synthase gamma chain, found in Pseudomonas fluorescens (strain ATCC BAA-477 / NRRL B-23932 / Pf-5).